A 134-amino-acid chain; its full sequence is Ribosome-binding factor A (134 aa).

Belongs to the RbfA family. Monomer. Binds 30S ribosomal subunits, but not 50S ribosomal subunits or 70S ribosomes.

Its subcellular location is the cytoplasm. In terms of biological role, one of several proteins that assist in the late maturation steps of the functional core of the 30S ribosomal subunit. Associates with free 30S ribosomal subunits (but not with 30S subunits that are part of 70S ribosomes or polysomes). Required for efficient processing of 16S rRNA. May interact with the 5'-terminal helix region of 16S rRNA. The sequence is that of Ribosome-binding factor A from Cyanothece sp. (strain PCC 7425 / ATCC 29141).